The sequence spans 565 residues: CTP synthase (565 aa).

The segment at 1–272 (MARPKNVKHI…DLRVMKKLGL (272 aa)) is amidoligase domain. Ser-18 lines the CTP pocket. Ser-18 serves as a coordination point for UTP. An ATP-binding site is contributed by 19-24 (SLGKGI). L-glutamine is bound at residue Tyr-59. Asp-76 contacts ATP. 2 residues coordinate Mg(2+): Asp-76 and Glu-146. CTP-binding positions include 153-155 (DIE), 193-198 (KTKPTQ), and Lys-229. Residues 193–198 (KTKPTQ) and Lys-229 contribute to the UTP site. The Glutamine amidotransferase type-1 domain occupies 299–543 (TIGICGKYTE…VHAAKEFAQG (245 aa)). Position 363 (Gly-363) interacts with L-glutamine. Cys-390 acts as the Nucleophile; for glutamine hydrolysis in catalysis. Residues 391-394 (LGMQ), Glu-414, and Arg-471 contribute to the L-glutamine site. Active-site residues include His-516 and Glu-518.

It belongs to the CTP synthase family. Homotetramer.

The catalysed reaction is UTP + L-glutamine + ATP + H2O = CTP + L-glutamate + ADP + phosphate + 2 H(+). The enzyme catalyses L-glutamine + H2O = L-glutamate + NH4(+). It catalyses the reaction UTP + NH4(+) + ATP = CTP + ADP + phosphate + 2 H(+). It participates in pyrimidine metabolism; CTP biosynthesis via de novo pathway; CTP from UDP: step 2/2. Allosterically activated by GTP, when glutamine is the substrate; GTP has no effect on the reaction when ammonia is the substrate. The allosteric effector GTP functions by stabilizing the protein conformation that binds the tetrahedral intermediate(s) formed during glutamine hydrolysis. Inhibited by the product CTP, via allosteric rather than competitive inhibition. Its function is as follows. Catalyzes the ATP-dependent amination of UTP to CTP with either L-glutamine or ammonia as the source of nitrogen. Regulates intracellular CTP levels through interactions with the four ribonucleotide triphosphates. This is CTP synthase from Chlorobaculum tepidum (strain ATCC 49652 / DSM 12025 / NBRC 103806 / TLS) (Chlorobium tepidum).